The primary structure comprises 622 residues: Chaperone protein HscA homolog (622 aa).

The protein belongs to the heat shock protein 70 family.

Chaperone involved in the maturation of iron-sulfur cluster-containing proteins. Has a low intrinsic ATPase activity which is markedly stimulated by HscB. The protein is Chaperone protein HscA homolog of Azoarcus sp. (strain BH72).